Reading from the N-terminus, the 224-residue chain is Orotate phosphoribosyltransferase (224 aa).

Residues lysine 26, 73–74, arginine 100, lysine 101, lysine 104, histidine 106, and 127–135 each bind 5-phospho-alpha-D-ribose 1-diphosphate; these read YK and EDVTTSGKS. 2 residues coordinate orotate: threonine 131 and arginine 160.

The protein belongs to the purine/pyrimidine phosphoribosyltransferase family. PyrE subfamily. Homodimer. It depends on Mg(2+) as a cofactor.

The catalysed reaction is orotidine 5'-phosphate + diphosphate = orotate + 5-phospho-alpha-D-ribose 1-diphosphate. It functions in the pathway pyrimidine metabolism; UMP biosynthesis via de novo pathway; UMP from orotate: step 1/2. Functionally, catalyzes the transfer of a ribosyl phosphate group from 5-phosphoribose 1-diphosphate to orotate, leading to the formation of orotidine monophosphate (OMP). This is Orotate phosphoribosyltransferase from Clostridium botulinum (strain Eklund 17B / Type B).